A 382-amino-acid polypeptide reads, in one-letter code: Mannitol-1-phosphate 5-dehydrogenase (382 aa).

3-14 (ALHFGAGNIGRG) provides a ligand contact to NAD(+).

Belongs to the mannitol dehydrogenase family.

It carries out the reaction D-mannitol 1-phosphate + NAD(+) = beta-D-fructose 6-phosphate + NADH + H(+). The polypeptide is Mannitol-1-phosphate 5-dehydrogenase (Salmonella agona (strain SL483)).